A 159-amino-acid polypeptide reads, in one-letter code: Disease resistance response protein Pi176 (159 aa).

It belongs to the BetVI family.

The sequence is that of Disease resistance response protein Pi176 from Pisum sativum (Garden pea).